The sequence spans 155 residues: SsrA-binding protein (155 aa).

Belongs to the SmpB family.

It is found in the cytoplasm. Functionally, required for rescue of stalled ribosomes mediated by trans-translation. Binds to transfer-messenger RNA (tmRNA), required for stable association of tmRNA with ribosomes. tmRNA and SmpB together mimic tRNA shape, replacing the anticodon stem-loop with SmpB. tmRNA is encoded by the ssrA gene; the 2 termini fold to resemble tRNA(Ala) and it encodes a 'tag peptide', a short internal open reading frame. During trans-translation Ala-aminoacylated tmRNA acts like a tRNA, entering the A-site of stalled ribosomes, displacing the stalled mRNA. The ribosome then switches to translate the ORF on the tmRNA; the nascent peptide is terminated with the 'tag peptide' encoded by the tmRNA and targeted for degradation. The ribosome is freed to recommence translation, which seems to be the essential function of trans-translation. The polypeptide is SsrA-binding protein (Bacillus cereus (strain ATCC 10987 / NRS 248)).